Consider the following 178-residue polypeptide: Crossover junction endodeoxyribonuclease RuvC (178 aa).

Catalysis depends on residues Asp-7, Glu-68, and Asp-141. Residues Asp-7, Glu-68, and Asp-141 each coordinate Mg(2+).

Belongs to the RuvC family. Homodimer which binds Holliday junction (HJ) DNA. The HJ becomes 2-fold symmetrical on binding to RuvC with unstacked arms; it has a different conformation from HJ DNA in complex with RuvA. In the full resolvosome a probable DNA-RuvA(4)-RuvB(12)-RuvC(2) complex forms which resolves the HJ. Mg(2+) serves as cofactor.

The protein resides in the cytoplasm. It carries out the reaction Endonucleolytic cleavage at a junction such as a reciprocal single-stranded crossover between two homologous DNA duplexes (Holliday junction).. In terms of biological role, the RuvA-RuvB-RuvC complex processes Holliday junction (HJ) DNA during genetic recombination and DNA repair. Endonuclease that resolves HJ intermediates. Cleaves cruciform DNA by making single-stranded nicks across the HJ at symmetrical positions within the homologous arms, yielding a 5'-phosphate and a 3'-hydroxyl group; requires a central core of homology in the junction. The consensus cleavage sequence is 5'-(A/T)TT(C/G)-3'. Cleavage occurs on the 3'-side of the TT dinucleotide at the point of strand exchange. HJ branch migration catalyzed by RuvA-RuvB allows RuvC to scan DNA until it finds its consensus sequence, where it cleaves and resolves the cruciform DNA. The polypeptide is Crossover junction endodeoxyribonuclease RuvC (Parafrankia sp. (strain EAN1pec)).